Consider the following 249-residue polypeptide: Coproheme decarboxylase (249 aa).

Residues Arg131, Tyr145 to Lys149, His172, Gln185, and Ser223 each bind Fe-coproporphyrin III. Tyr145 is an active-site residue.

Belongs to the ChdC family. Type 1 subfamily. Requires Fe-coproporphyrin III as cofactor.

It carries out the reaction Fe-coproporphyrin III + 2 H2O2 + 2 H(+) = heme b + 2 CO2 + 4 H2O. The enzyme catalyses Fe-coproporphyrin III + H2O2 + H(+) = harderoheme III + CO2 + 2 H2O. The catalysed reaction is harderoheme III + H2O2 + H(+) = heme b + CO2 + 2 H2O. It functions in the pathway porphyrin-containing compound metabolism; protoheme biosynthesis. Its function is as follows. Involved in coproporphyrin-dependent heme b biosynthesis. Catalyzes the decarboxylation of Fe-coproporphyrin III (coproheme) to heme b (protoheme IX), the last step of the pathway. The reaction occurs in a stepwise manner with a three-propionate intermediate. This chain is Coproheme decarboxylase, found in Halalkalibacterium halodurans (strain ATCC BAA-125 / DSM 18197 / FERM 7344 / JCM 9153 / C-125) (Bacillus halodurans).